The chain runs to 1936 residues: Potassium channel K1 (1936 aa).

The next 6 helical transmembrane spans lie at 175 to 195 (IIILYIIMLEFGSMLISYILL), 598 to 618 (VWIIAILIRIILWCIVWLWAA), 643 to 663 (GYIECTFQWCGVLDYLFGLYF), 670 to 690 (YIFSFFSLIDFITTPVSSFIM), 701 to 721 (TYWFLILGPLRFLRLVRAEST), and 734 to 754 (IIIIGIIILSLAILFTFSGIM). Positions 772–788 (FVYFGVITMSTVGYGDY) form an intramembrane region, pore-forming. The helical transmembrane segment at 791-811 (VTPAGKCLTMFIIVTCFTFVG) threads the bilayer. A coiled-coil region spans residues 1141-1185 (DTSSMINYKSKSRVNYKMVKGTKNEFIRNQNYNINSIYYANNDNM).

It localises to the membrane. It catalyses the reaction K(+)(in) = K(+)(out). Its activity is regulated as follows. Partially inhibited by Ba(2+) and quinine. Probably insensitive to tetraethylammonium (TEA). Its function is as follows. Likely a predominant potassium channel in the erythrocytic stages of parasites. Mediates transmembrane potassium transport. Required for the development of oocysts in the mosquito midgut. The chain is Potassium channel K1 from Plasmodium berghei (strain Anka).